A 163-amino-acid polypeptide reads, in one-letter code: Nucleotide-binding protein Mvan_0997 (163 aa).

It belongs to the YajQ family.

Nucleotide-binding protein. This is Nucleotide-binding protein Mvan_0997 from Mycolicibacterium vanbaalenii (strain DSM 7251 / JCM 13017 / BCRC 16820 / KCTC 9966 / NRRL B-24157 / PYR-1) (Mycobacterium vanbaalenii).